Reading from the N-terminus, the 109-residue chain is uncharacterized protein (109 aa).

Helical transmembrane passes span 18 to 38 and 48 to 68; these read TTLA…LLTL and AGLI…VIAL.

Its subcellular location is the cell membrane. This is an uncharacterized protein from Mycobacterium tuberculosis (strain CDC 1551 / Oshkosh).